Here is a 394-residue protein sequence, read N- to C-terminus: GDSL esterase/lipase At2g27360 (394 aa).

The N-terminal stretch at Met-1 to Ser-24 is a signal peptide. The active-site Nucleophile is the Ser-40. N-linked (GlcNAc...) asparagine glycosylation is found at Asn-136 and Asn-319. Catalysis depends on residues Asp-344 and His-347. N-linked (GlcNAc...) asparagine glycans are attached at residues Asn-371 and Asn-382.

It belongs to the 'GDSL' lipolytic enzyme family.

It localises to the secreted. The polypeptide is GDSL esterase/lipase At2g27360 (Arabidopsis thaliana (Mouse-ear cress)).